A 129-amino-acid polypeptide reads, in one-letter code: Azurin-2 (129 aa).

Residues 1–129 (AQCEATVESN…MMKGTLKLGS (129 aa)) form the Plastocyanin-like domain. Cys-3 and Cys-26 form a disulfide bridge. Cu cation is bound by residues His-46, Cys-112, His-117, and Met-121.

It is found in the periplasm. Transfers electrons from cytochrome c551 to cytochrome oxidase. The sequence is that of Azurin-2 from Alcaligenes xylosoxydans xylosoxydans (Achromobacter xylosoxidans).